We begin with the raw amino-acid sequence, 177 residues long: Large ribosomal subunit protein uL6 (177 aa).

It belongs to the universal ribosomal protein uL6 family. As to quaternary structure, part of the 50S ribosomal subunit.

This protein binds to the 23S rRNA, and is important in its secondary structure. It is located near the subunit interface in the base of the L7/L12 stalk, and near the tRNA binding site of the peptidyltransferase center. The sequence is that of Large ribosomal subunit protein uL6 from Glaesserella parasuis serovar 5 (strain SH0165) (Haemophilus parasuis).